Consider the following 289-residue polypeptide: Nucleotide-binding protein LAF_0356 (289 aa).

12–19 (GMSGAGKT) provides a ligand contact to ATP. 62-65 (DSRS) serves as a coordination point for GTP.

Belongs to the RapZ-like family.

Its function is as follows. Displays ATPase and GTPase activities. This is Nucleotide-binding protein LAF_0356 from Limosilactobacillus fermentum (strain NBRC 3956 / LMG 18251) (Lactobacillus fermentum).